A 100-amino-acid polypeptide reads, in one-letter code: Large ribosomal subunit protein bL21 (100 aa).

This sequence belongs to the bacterial ribosomal protein bL21 family. As to quaternary structure, part of the 50S ribosomal subunit. Contacts protein L20.

In terms of biological role, this protein binds to 23S rRNA in the presence of protein L20. In Ureaplasma urealyticum serovar 10 (strain ATCC 33699 / Western), this protein is Large ribosomal subunit protein bL21.